The chain runs to 872 residues: Alanine--tRNA ligase (872 aa).

The Zn(2+) site is built by His-563, His-567, Cys-665, and His-669.

It belongs to the class-II aminoacyl-tRNA synthetase family. It depends on Zn(2+) as a cofactor.

The protein localises to the cytoplasm. It catalyses the reaction tRNA(Ala) + L-alanine + ATP = L-alanyl-tRNA(Ala) + AMP + diphosphate. In terms of biological role, catalyzes the attachment of alanine to tRNA(Ala) in a two-step reaction: alanine is first activated by ATP to form Ala-AMP and then transferred to the acceptor end of tRNA(Ala). Also edits incorrectly charged Ser-tRNA(Ala) and Gly-tRNA(Ala) via its editing domain. The polypeptide is Alanine--tRNA ligase (Bacteroides thetaiotaomicron (strain ATCC 29148 / DSM 2079 / JCM 5827 / CCUG 10774 / NCTC 10582 / VPI-5482 / E50)).